Consider the following 457-residue polypeptide: Argininosuccinate lyase (457 aa).

The protein belongs to the lyase 1 family. Argininosuccinate lyase subfamily.

The protein resides in the cytoplasm. The enzyme catalyses 2-(N(omega)-L-arginino)succinate = fumarate + L-arginine. It functions in the pathway amino-acid biosynthesis; L-arginine biosynthesis; L-arginine from L-ornithine and carbamoyl phosphate: step 3/3. This chain is Argininosuccinate lyase, found in Psychrobacter cryohalolentis (strain ATCC BAA-1226 / DSM 17306 / VKM B-2378 / K5).